A 510-amino-acid chain; its full sequence is Putative serine protease K12H4.7 (510 aa).

Positions 1 to 19 (MKTLLAVLLAACVLTQVLS) are cleaved as a signal peptide. The Charge relay system role is filled by Ser187. N-linked (GlcNAc...) asparagine glycosylation occurs at Asn234. Asp452 acts as the Charge relay system in catalysis. Asn473 carries N-linked (GlcNAc...) asparagine glycosylation. Catalysis depends on His477, which acts as the Charge relay system.

Belongs to the peptidase S28 family.

This chain is Putative serine protease K12H4.7, found in Caenorhabditis elegans.